Reading from the N-terminus, the 508-residue chain is UDP-N-acetylmuramoyl-L-alanyl-D-glutamate--2,6-diaminopimelate ligase (508 aa).

S29 contributes to the UDP-N-acetyl-alpha-D-muramoyl-L-alanyl-D-glutamate binding site. Position 112–118 (112–118) interacts with ATP; sequence GTNGKTS. Residues 159–160, S186, Q192, and R194 each bind UDP-N-acetyl-alpha-D-muramoyl-L-alanyl-D-glutamate; that span reads TT. The residue at position 226 (K226) is an N6-carboxylysine. Meso-2,6-diaminopimelate-binding positions include R398, 421-424, G473, and E477; that span reads DNPR. The Meso-diaminopimelate recognition motif signature appears at 421 to 424; sequence DNPR.

It belongs to the MurCDEF family. MurE subfamily. It depends on Mg(2+) as a cofactor. In terms of processing, carboxylation is probably crucial for Mg(2+) binding and, consequently, for the gamma-phosphate positioning of ATP.

It is found in the cytoplasm. It catalyses the reaction UDP-N-acetyl-alpha-D-muramoyl-L-alanyl-D-glutamate + meso-2,6-diaminopimelate + ATP = UDP-N-acetyl-alpha-D-muramoyl-L-alanyl-gamma-D-glutamyl-meso-2,6-diaminopimelate + ADP + phosphate + H(+). It functions in the pathway cell wall biogenesis; peptidoglycan biosynthesis. In terms of biological role, catalyzes the addition of meso-diaminopimelic acid to the nucleotide precursor UDP-N-acetylmuramoyl-L-alanyl-D-glutamate (UMAG) in the biosynthesis of bacterial cell-wall peptidoglycan. In Janthinobacterium sp. (strain Marseille) (Minibacterium massiliensis), this protein is UDP-N-acetylmuramoyl-L-alanyl-D-glutamate--2,6-diaminopimelate ligase.